The sequence spans 333 residues: uncharacterized protein (333 aa).

The stretch at Asn-94–Ser-122 forms a coiled coil.

This is an uncharacterized protein from Aquifex aeolicus (strain VF5).